The following is a 311-amino-acid chain: Olfactory receptor 5M8 (311 aa).

At 1–24 the chain is on the extracellular side; sequence MRRNCTLVTEFILLGLTSRRELQI. Asn-4 is a glycosylation site (N-linked (GlcNAc...) asparagine). Residues 25-45 form a helical membrane-spanning segment; it reads LLFTLFLAIYMVTVAGNLGMI. Residues 46–53 are Cytoplasmic-facing; that stretch reads VLIQANAW. Residues 54–74 traverse the membrane as a helical segment; it reads LHMPMYFFLSHLSFVDLCFSS. At 75–98 the chain is on the extracellular side; sequence NVTPKMLEIFLSEKKSISYPACLV. Cys-96 and Cys-188 are disulfide-bonded. Residues 99 to 119 form a helical membrane-spanning segment; sequence QCYLFIALVHVEIYILAVMAF. Residues 120-138 are Cytoplasmic-facing; sequence DRYMAICNPLLYGSRMSKS. Residues 139 to 159 form a helical membrane-spanning segment; the sequence is VCSFLITVPYVYGALTGLMET. The Extracellular portion of the chain corresponds to 160–195; sequence MWTYNLAFCGPNEINHFYCADPPLIKLACSDTYNKE. A helical transmembrane segment spans residues 196 to 216; it reads LSMFIVAGWNLSFSLFIICIS. Topologically, residues 217–236 are cytoplasmic; that stretch reads YLYIFPAILKIRSTEGRQKA. The helical transmembrane segment at 237-257 threads the bilayer; that stretch reads FSTCGSHLTAVTIFYATLFFM. Residues 258–270 are Extracellular-facing; it reads YLRPPSKESVEQG. A helical transmembrane segment spans residues 271–291; the sequence is KMVAVFYTTVIPMLNLIIYSL. Topologically, residues 292 to 311 are cytoplasmic; the sequence is RNKNVKEALIKELSMKIYFS.

This sequence belongs to the G-protein coupled receptor 1 family.

It is found in the cell membrane. Its function is as follows. Odorant receptor. In Homo sapiens (Human), this protein is Olfactory receptor 5M8 (OR5M8).